Here is a 424-residue protein sequence, read N- to C-terminus: Type II methyltransferase M.BspRI (424 aa).

The 351-residue stretch at 58 to 408 (FNVLSLFCGA…KSIAQFAADY (351 aa)) folds into the SAM-dependent MTase C5-type domain. The S-methylcysteine intermediate role is filled by Cys-156. Cys-181 bears the S-methylcysteine; by autocatalysis mark.

This sequence belongs to the class I-like SAM-binding methyltransferase superfamily. C5-methyltransferase family. In terms of assembly, monomer. In the absence of DNA, can self-methylate two cysteine residues.

The catalysed reaction is a 2'-deoxycytidine in DNA + S-adenosyl-L-methionine = a 5-methyl-2'-deoxycytidine in DNA + S-adenosyl-L-homocysteine + H(+). In terms of biological role, a methylase, recognizes the double-stranded sequence 5'-GGCC-3', methylates C-3 on both strands, and protects the DNA from cleavage by the BspRI endonuclease. In Lysinibacillus sphaericus (Bacillus sphaericus), this protein is Type II methyltransferase M.BspRI (bspRIM).